Here is a 340-residue protein sequence, read N- to C-terminus: Protein RecA (340 aa).

65–72 (GPESGGKT) lines the ATP pocket.

The protein belongs to the RecA family.

It is found in the cytoplasm. Its function is as follows. Can catalyze the hydrolysis of ATP in the presence of single-stranded DNA, the ATP-dependent uptake of single-stranded DNA by duplex DNA, and the ATP-dependent hybridization of homologous single-stranded DNAs. It interacts with LexA causing its activation and leading to its autocatalytic cleavage. This is Protein RecA from Thermus aquaticus.